A 281-amino-acid polypeptide reads, in one-letter code: Nucleoid occlusion protein (281 aa).

A DNA-binding region (H-T-H motif) is located at residues 145 to 164; that stretch reads EALAQRLGKGQSTIANKLRL.

Belongs to the ParB family.

It is found in the cytoplasm. The protein localises to the nucleoid. Effects nucleoid occlusion by binding relatively nonspecifically to DNA and preventing the assembly of the division machinery in the vicinity of the nucleoid, especially under conditions that disturb the cell cycle. It helps to coordinate cell division and chromosome segregation by preventing the formation of the Z ring through the nucleoid, which would cause chromosome breakage. The polypeptide is Nucleoid occlusion protein (Geobacillus sp. (strain WCH70)).